The primary structure comprises 174 residues: MTQQAIFAGGCFWCVEAVFNQIKGVEKATSGYINGTTENPTYKEVCTGETGHAEAVKVEFDATVISYEKLLDIFFSIHNPTQLNHQGEDVGTQYRTGIYYLNDEQEQLANKKIAELQPHFAEKIVTEVLPAQTFYPAEDYHQGYLLQNPQNSYCNLVATPKFLKAKVKFEEIWK.

The active site involves Cys11.

It belongs to the MsrA Met sulfoxide reductase family.

It catalyses the reaction L-methionyl-[protein] + [thioredoxin]-disulfide + H2O = L-methionyl-(S)-S-oxide-[protein] + [thioredoxin]-dithiol. The enzyme catalyses [thioredoxin]-disulfide + L-methionine + H2O = L-methionine (S)-S-oxide + [thioredoxin]-dithiol. Functionally, has an important function as a repair enzyme for proteins that have been inactivated by oxidation. Catalyzes the reversible oxidation-reduction of methionine sulfoxide in proteins to methionine. This is Peptide methionine sulfoxide reductase MsrA from Pasteurella multocida (strain Pm70).